Here is a 930-residue protein sequence, read N- to C-terminus: Isoleucine--tRNA ligase (930 aa).

Positions 57-67 match the 'HIGH' region motif; sequence PYANGNIHVGH. Glu554 provides a ligand contact to L-isoleucyl-5'-AMP. A 'KMSKS' region motif is present at residues 595-599; sequence KMSKS. ATP is bound at residue Lys598. Zn(2+) is bound by residues Cys888, Cys891, Cys908, and Cys911.

Belongs to the class-I aminoacyl-tRNA synthetase family. IleS type 1 subfamily. In terms of assembly, monomer. Requires Zn(2+) as cofactor.

The protein localises to the cytoplasm. It catalyses the reaction tRNA(Ile) + L-isoleucine + ATP = L-isoleucyl-tRNA(Ile) + AMP + diphosphate. In terms of biological role, catalyzes the attachment of isoleucine to tRNA(Ile). As IleRS can inadvertently accommodate and process structurally similar amino acids such as valine, to avoid such errors it has two additional distinct tRNA(Ile)-dependent editing activities. One activity is designated as 'pretransfer' editing and involves the hydrolysis of activated Val-AMP. The other activity is designated 'posttransfer' editing and involves deacylation of mischarged Val-tRNA(Ile). The polypeptide is Isoleucine--tRNA ligase (Streptococcus gordonii (strain Challis / ATCC 35105 / BCRC 15272 / CH1 / DL1 / V288)).